A 237-amino-acid chain; its full sequence is Type II secretion system protein J (237 aa).

The propeptide at 1–6 is leader sequence; it reads MRLQRG. F7 carries the N-methylphenylalanine modification. Residues 7-29 traverse the membrane as a helical segment; that stretch reads FTLLELLIAIAIFALLALATYRM. The interval 203 to 237 is disordered; sequence PLKQDQPQGQPGGENGENGEGGVPQPPEGMPGAPE. Residues 212–224 show a composition bias toward gly residues; the sequence is QPGGENGENGEGG. The span at 226–237 shows a compositional bias: pro residues; sequence PQPPEGMPGAPE.

It belongs to the GSP J family. In terms of assembly, type II secretion is composed of four main components: the outer membrane complex, the inner membrane complex, the cytoplasmic secretion ATPase and the periplasm-spanning pseudopilus. Forms the tip of the type II pseudopilus by interacting with XcpV, XcpU and XcpX. Interacts with core component XcpT. In terms of processing, cleaved by prepilin peptidase. Methylated by prepilin peptidase at the amino group of the N-terminal phenylalanine once the leader sequence is cleaved by prepilin peptidase.

The protein localises to the cell inner membrane. Its function is as follows. Component of the type II secretion system required for the energy-dependent secretion of extracellular factors such as proteases and toxins from the periplasm. Part of the pseudopilus tip complex that is critical for the recognition and binding of secretion substrates. Type II pseudopilus confers increased bacterial adhesive capabilities. The protein is Type II secretion system protein J (xcpW) of Pseudomonas aeruginosa (strain ATCC 15692 / DSM 22644 / CIP 104116 / JCM 14847 / LMG 12228 / 1C / PRS 101 / PAO1).